Reading from the N-terminus, the 184-residue chain is Uroplakin-2 (184 aa).

The N-terminal stretch at 1–25 is a signal peptide; that stretch reads MAPLLPIRTLPLILILLALLSPGAA. Residues 26–84 constitute a propeptide that is removed on maturation; sequence DFNISSLSGLLSPALTESLLVALPPCHLTGGNATLMVRRANDSKVVTSSFVVPPCRGRR. Residues Asn-28, Asn-57, and Asn-66 are each glycosylated (N-linked (GlcNAc...) asparagine). Over 85 to 155 the chain is Lumenal; it reads ELVSVVDSGA…IGLGMARTGG (71 aa). A helical transmembrane segment spans residues 156 to 176; sequence MVVITVLLSVAMFLLVLGFII. Topologically, residues 177-184 are cytoplasmic; the sequence is ALALGSRK.

This sequence belongs to the uroplakin-2 family. Interacts with uroplakin-1a (UPK1A). Expressed in ureter.

Its subcellular location is the cell membrane. In terms of biological role, component of the asymmetric unit membrane (AUM); a highly specialized biomembrane elaborated by terminally differentiated urothelial cells. May play an important role in regulating the assembly of the AUM. This is Uroplakin-2 (UPK2) from Homo sapiens (Human).